The primary structure comprises 274 residues: Thiamine kinase (274 aa).

This sequence belongs to the thiamine kinase family.

It carries out the reaction thiamine + ATP = thiamine phosphate + ADP + H(+). The protein operates within cofactor biosynthesis; thiamine diphosphate biosynthesis; thiamine phosphate from thiamine: step 1/1. Its function is as follows. Catalyzes the ATP-dependent phosphorylation of thiamine to thiamine phosphate. Is involved in thiamine salvage. In Escherichia coli O157:H7 (strain EC4115 / EHEC), this protein is Thiamine kinase.